The chain runs to 276 residues: Putative translation initiation factor eIF-2B subunit 2-like (276 aa).

The protein belongs to the eIF-2B alpha/beta/delta subunits family. Complex of two different subunits.

Functionally, catalyzes the exchange of initiation factor 2-bound GDP for GTP. This is Putative translation initiation factor eIF-2B subunit 2-like from Pyrococcus horikoshii (strain ATCC 700860 / DSM 12428 / JCM 9974 / NBRC 100139 / OT-3).